A 311-amino-acid polypeptide reads, in one-letter code: Thioredoxin reductase (311 aa).

35-42 (ERGIPGGQ) serves as a coordination point for FAD. C134 and C137 are disulfide-bonded. FAD is bound at residue 277–286 (DVRDKGLRQI).

This sequence belongs to the class-II pyridine nucleotide-disulfide oxidoreductase family. In terms of assembly, homodimer. FAD is required as a cofactor.

The protein resides in the cytoplasm. The enzyme catalyses [thioredoxin]-dithiol + NADP(+) = [thioredoxin]-disulfide + NADPH + H(+). This Staphylococcus aureus (strain MRSA252) protein is Thioredoxin reductase (trxB).